A 309-amino-acid polypeptide reads, in one-letter code: uncharacterized protein (309 aa).

A compositionally biased stretch (basic residues) spans 1–11 (MPGNSRRRGAV). Residues 1-69 (MPGNSRRRGA…PVKRTDETET (69 aa)) are disordered. 3 residues coordinate S-adenosyl-L-methionine: Gly-261, Ile-281, and Leu-290.

It belongs to the class IV-like SAM-binding methyltransferase superfamily. RNA methyltransferase TrmH family.

This is an uncharacterized protein from Mycobacterium leprae (strain TN).